The following is an 83-amino-acid chain: Large ribosomal subunit protein bL31B (83 aa).

This sequence belongs to the bacterial ribosomal protein bL31 family. Type B subfamily. As to quaternary structure, part of the 50S ribosomal subunit.

This is Large ribosomal subunit protein bL31B from Lactobacillus johnsonii (strain CNCM I-12250 / La1 / NCC 533).